Consider the following 376-residue polypeptide: Enoyl-[acyl-carrier-protein] reductase, mitochondrial (376 aa).

Residue tyrosine 72 is the Proton donor of the active site. NADP(+) contacts are provided by residues asparagine 154, 182–185 (TSAV), 205–207 (RDR), 280–283 (YGGM), 305–307 (YWI), and lysine 369.

It belongs to the zinc-containing alcohol dehydrogenase family. Quinone oxidoreductase subfamily. In terms of assembly, homodimer.

It localises to the mitochondrion matrix. The catalysed reaction is a 2,3-saturated acyl-[ACP] + NADP(+) = a (2E)-enoyl-[ACP] + NADPH + H(+). Catalyzes the NADPH-dependent reduction of trans-2-enoyl thioesters in mitochondrial fatty acid synthesis (fatty acid synthesis type II). Fatty acid chain elongation in mitochondria uses acyl carrier protein (ACP) as an acyl group carrier, but the enzyme accepts both ACP and CoA thioesters as substrates in vitro. Required for respiration and the maintenance of the mitochondrial compartment. The chain is Enoyl-[acyl-carrier-protein] reductase, mitochondrial (ETR1) from Eremothecium gossypii (strain ATCC 10895 / CBS 109.51 / FGSC 9923 / NRRL Y-1056) (Yeast).